Consider the following 452-residue polypeptide: MGRYFGTDGIRGEANRELTVDKALRLGYALGYYLKNNNPNEEKIKVIMGSDTRISGYMLRSALTAGLTSMGIYIDFVGVIPTPGVAYITKQKKAKAGIMISASHNPAKDNGIKIFNLEGYKLSDEIENQIEDYMDNLDKILANPLAGDKVGKFKYAEDEYFQYKNYLTQCVKGNFKDIKIVLDTANGAAYRAAKDVFLDLRAELVVINDAPNGRNINVKCGSTHPDILSKVVVGYEADLGLAYDGDADRLIAVDKFGNVIDGDKIIGILALGMKNKGTLKNNKVVTTVMSNIGFEKYLKENSIELLRANVGDRYVLEKMLAEDVVIGGEQSGHIILKDYATTGDGVLSSLKLVEVIRDTGKDLHELVSSIKDAPQTLINVKVDNIKKNTWDKNEIIMSFINEANKKYKDEVRILVRKSGTEPLIRVMTEGDDKQLVHKLAEDIAHLIEKELN.

S103 (phosphoserine intermediate) is an active-site residue. The Mg(2+) site is built by S103, D244, D246, and D248. S103 is subject to Phosphoserine.

This sequence belongs to the phosphohexose mutase family. The cofactor is Mg(2+). Post-translationally, activated by phosphorylation.

It carries out the reaction alpha-D-glucosamine 1-phosphate = D-glucosamine 6-phosphate. Catalyzes the conversion of glucosamine-6-phosphate to glucosamine-1-phosphate. The chain is Phosphoglucosamine mutase from Fusobacterium nucleatum subsp. nucleatum (strain ATCC 25586 / DSM 15643 / BCRC 10681 / CIP 101130 / JCM 8532 / KCTC 2640 / LMG 13131 / VPI 4355).